We begin with the raw amino-acid sequence, 253 residues long: Sugar fermentation stimulation protein homolog (253 aa).

Belongs to the SfsA family.

This is Sugar fermentation stimulation protein homolog from Prochlorococcus marinus (strain NATL1A).